Reading from the N-terminus, the 188-residue chain is Putative manganese efflux pump MntP (188 aa).

Helical transmembrane passes span 8–28, 39–59, 68–88, 106–126, 131–151, and 164–184; these read CLGL…GFVI, IALF…LTGL, IDHW…IYEA, LLAL…GLSL, ILLP…IGVF, and IEII…IEDL.

This sequence belongs to the MntP (TC 9.B.29) family.

It localises to the cell inner membrane. Its function is as follows. Probably functions as a manganese efflux pump. This is Putative manganese efflux pump MntP from Crocosphaera subtropica (strain ATCC 51142 / BH68) (Cyanothece sp. (strain ATCC 51142)).